A 985-amino-acid polypeptide reads, in one-letter code: UPF0182 protein Cgl0786/cg0896 (985 aa).

The next 7 helical transmembrane spans lie at 19–39 (VTWIFAIIALVILIAPMSVGF), 63–83 (IVLFVIFALIAGFVTWLAGYF), 115–135 (VMVIIPIFVALLAGLIGQRSW), 176–196 (SMMLIVAFLIALVGHYLMGGI), 215–235 (TQLAVTAGLWMLVKVAGYWLD), 262–282 (KIILLVIALFVAIAFFSAIFL), and 290–310 (LAVVLMLLSSVIIGAAWPLML). A disordered region spans residues 904-944 (KEAQDIEEVDGTATTPSTDETDTDTDQPATETPTAPVSEAE). Residues 929–939 (DQPATETPTAP) are compositionally biased toward low complexity.

Belongs to the UPF0182 family.

The protein resides in the cell membrane. The polypeptide is UPF0182 protein Cgl0786/cg0896 (Corynebacterium glutamicum (strain ATCC 13032 / DSM 20300 / JCM 1318 / BCRC 11384 / CCUG 27702 / LMG 3730 / NBRC 12168 / NCIMB 10025 / NRRL B-2784 / 534)).